A 143-amino-acid polypeptide reads, in one-letter code: ATP synthase F(0) complex subunit C2, mitochondrial (143 aa).

Residues 1–68 constitute a mitochondrion transit peptide; that stretch reads MYTCAKFVST…RSFQTSAISR (68 aa). A helical transmembrane segment spans residues 84–104; sequence VGVAGSGAGIGTVFGSLIIGY. Lys-111 carries the post-translational modification N6,N6,N6-trimethyllysine. Residues 119 to 139 traverse the membrane as a helical segment; the sequence is ILGFALSEAMGLFCLMVAFLI.

Belongs to the ATPase C chain family. F-type ATPases have 2 components, CF(1) - the catalytic core - and CF(0) - the membrane proton channel. CF(1) has five subunits: alpha(3), beta(3), gamma(1), delta(1), epsilon(1). CF(0) has three main subunits: a, b and c. Interacts with DNAJC30; interaction is direct. In terms of processing, trimethylated by ATPSCKMT at Lys-111. Methylation is required for proper incorporation of the C subunit into the ATP synthase complex and mitochondrial respiration.

Its subcellular location is the mitochondrion membrane. In terms of biological role, mitochondrial membrane ATP synthase (F(1)F(0) ATP synthase or Complex V) produces ATP from ADP in the presence of a proton gradient across the membrane which is generated by electron transport complexes of the respiratory chain. F-type ATPases consist of two structural domains, F(1) - containing the extramembraneous catalytic core and F(0) - containing the membrane proton channel, linked together by a central stalk and a peripheral stalk. During catalysis, ATP synthesis in the catalytic domain of F(1) is coupled via a rotary mechanism of the central stalk subunits to proton translocation. Part of the complex F(0) domain. A homomeric c-ring of probably 10 subunits is part of the complex rotary element. The protein is ATP synthase F(0) complex subunit C2, mitochondrial of Ovis aries (Sheep).